A 280-amino-acid polypeptide reads, in one-letter code: MGLKKFKPITPGLRHLILPDFSEITKEEPEKSLLKPLKKSGGRNNFGHVTSRFRGGGHKRLYRIIDFRRDKDNIPAKVASIEYDPNRTARIALLHYADGEKRYIIAPEGLKVGDIIMSGENVDIKIGNNLPLKNIPDGTLIHNLELYPGRGGQLVRAAGTAAQILGKEGKWAYVRLPSGEIRLFDLNCRATIGQVSNVDHQNVSLGKAGRSRWLGRRPHVRGSAMNPVDHPHGGGEGKAPIGHPSPLTPWGKPTLGYKTRKKRKPSDRFIIQRANDKKEK.

The tract at residues 215 to 280 (GRRPHVRGSA…IQRANDKKEK (66 aa)) is disordered.

The protein belongs to the universal ribosomal protein uL2 family. As to quaternary structure, part of the 50S ribosomal subunit. Forms a bridge to the 30S subunit in the 70S ribosome.

Functionally, one of the primary rRNA binding proteins. Required for association of the 30S and 50S subunits to form the 70S ribosome, for tRNA binding and peptide bond formation. It has been suggested to have peptidyltransferase activity; this is somewhat controversial. Makes several contacts with the 16S rRNA in the 70S ribosome. This is Large ribosomal subunit protein uL2 from Dictyoglomus thermophilum (strain ATCC 35947 / DSM 3960 / H-6-12).